The following is a 452-amino-acid chain: Phosphoglucosamine mutase (452 aa).

Ser98 functions as the Phosphoserine intermediate in the catalytic mechanism. Positions 98, 239, 241, and 243 each coordinate Mg(2+). The residue at position 98 (Ser98) is a Phosphoserine.

Belongs to the phosphohexose mutase family. The cofactor is Mg(2+). In terms of processing, activated by phosphorylation.

The catalysed reaction is alpha-D-glucosamine 1-phosphate = D-glucosamine 6-phosphate. Functionally, catalyzes the conversion of glucosamine-6-phosphate to glucosamine-1-phosphate. This is Phosphoglucosamine mutase from Anaplasma marginale (strain St. Maries).